We begin with the raw amino-acid sequence, 146 residues long: ATP synthase epsilon chain (146 aa).

The interval 103 to 122 is disordered; the sequence is SAKKRAEQHMQEAKEKHNER.

Belongs to the ATPase epsilon chain family. As to quaternary structure, F-type ATPases have 2 components, CF(1) - the catalytic core - and CF(0) - the membrane proton channel. CF(1) has five subunits: alpha(3), beta(3), gamma(1), delta(1), epsilon(1). CF(0) has three main subunits: a, b and c.

It localises to the cell membrane. Functionally, produces ATP from ADP in the presence of a proton gradient across the membrane. This Lactobacillus johnsonii (strain CNCM I-12250 / La1 / NCC 533) protein is ATP synthase epsilon chain.